Consider the following 444-residue polypeptide: L-ornithine N(5)-monooxygenase (444 aa).

Residues 40-48 (ERQPAFGWH) and glutamine 59 each bind FAD. Lysine 64 is a binding site for substrate. Residue valine 125 participates in FAD binding. Residues 211 to 214 (AGQS) and arginine 236 contribute to the NADP(+) site. Substrate contacts are provided by residues 250–253 (NEIF) and asparagine 280. 280 to 282 (NYA) contributes to the NADP(+) binding site. FAD is bound at residue 408–410 (RCC). A compositionally biased stretch (basic residues) spans 420–432 (SARRSKTGSRPRT). Residues 420-444 (SARRSKTGSRPRTMKAWPGPRTKND) form a disordered region.

This sequence belongs to the lysine N(6)-hydroxylase/L-ornithine N(5)-oxygenase family. It depends on FAD as a cofactor.

The catalysed reaction is L-ornithine + NADPH + O2 = N(5)-hydroxy-L-ornithine + NADP(+) + H2O. Its pathway is siderophore biosynthesis; ornibactin biosynthesis. In terms of biological role, catalyzes the conversion of L-ornithine to N(5)-hydroxyornithine, the first step in the biosynthesis of all hydroxamate-containing siderophores, such as ornibactin. The sequence is that of L-ornithine N(5)-monooxygenase from Burkholderia cepacia (Pseudomonas cepacia).